The primary structure comprises 184 residues: Acetyl-CoA decarbonylase/synthase complex subunit epsilon 1 (184 aa).

It belongs to the CdhB family. As to quaternary structure, heterotetramer of two alpha and two epsilon subunits. The ACDS complex is made up of alpha, epsilon, beta, gamma and delta subunits with a probable stoichiometry of (alpha(2)epsilon(2))(4)-beta(8)-(gamma(1)delta(1))(8).

Its function is as follows. Part of a complex that catalyzes the reversible cleavage of acetyl-CoA, allowing autotrophic growth from CO(2). The alpha-epsilon subcomponent functions as a carbon monoxide dehydrogenase. The precise role of the epsilon subunit is unclear; it may have a stabilizing role within the alpha(2)epsilon(2) component and/or be involved in electron transfer to FAD during a potential FAD-mediated CO oxidation. This Archaeoglobus fulgidus (strain ATCC 49558 / DSM 4304 / JCM 9628 / NBRC 100126 / VC-16) protein is Acetyl-CoA decarbonylase/synthase complex subunit epsilon 1 (cdhB1).